Here is a 383-residue protein sequence, read N- to C-terminus: Chorismate synthase (383 aa).

Residue Arg-48 participates in NADP(+) binding. Residues 125-127, Gly-286, 301-305, and Arg-328 contribute to the FMN site; these read RSS and HAPTS. The tract at residues 361 to 383 is disordered; that stretch reads PDRLDDNPGQYETEYHPSSPQTN.

It belongs to the chorismate synthase family. FMNH2 is required as a cofactor.

The enzyme catalyses 5-O-(1-carboxyvinyl)-3-phosphoshikimate = chorismate + phosphate. Its pathway is metabolic intermediate biosynthesis; chorismate biosynthesis; chorismate from D-erythrose 4-phosphate and phosphoenolpyruvate: step 7/7. Functionally, catalyzes the anti-1,4-elimination of the C-3 phosphate and the C-6 proR hydrogen from 5-enolpyruvylshikimate-3-phosphate (EPSP) to yield chorismate, which is the branch point compound that serves as the starting substrate for the three terminal pathways of aromatic amino acid biosynthesis. This reaction introduces a second double bond into the aromatic ring system. This chain is Chorismate synthase, found in Haloquadratum walsbyi (strain DSM 16790 / HBSQ001).